Consider the following 277-residue polypeptide: Putative phosphoenolpyruvate synthase regulatory protein (277 aa).

157–164 lines the ADP pocket; sequence GVSRCGKT.

The protein belongs to the pyruvate, phosphate/water dikinase regulatory protein family. PSRP subfamily.

The catalysed reaction is [pyruvate, water dikinase] + ADP = [pyruvate, water dikinase]-phosphate + AMP + H(+). It catalyses the reaction [pyruvate, water dikinase]-phosphate + phosphate + H(+) = [pyruvate, water dikinase] + diphosphate. Functionally, bifunctional serine/threonine kinase and phosphorylase involved in the regulation of the phosphoenolpyruvate synthase (PEPS) by catalyzing its phosphorylation/dephosphorylation. The protein is Putative phosphoenolpyruvate synthase regulatory protein of Erwinia tasmaniensis (strain DSM 17950 / CFBP 7177 / CIP 109463 / NCPPB 4357 / Et1/99).